The following is a 284-amino-acid chain: 2-dehydro-3-deoxyphosphooctonate aldolase (284 aa).

The protein belongs to the KdsA family.

The protein resides in the cytoplasm. It catalyses the reaction D-arabinose 5-phosphate + phosphoenolpyruvate + H2O = 3-deoxy-alpha-D-manno-2-octulosonate-8-phosphate + phosphate. It functions in the pathway carbohydrate biosynthesis; 3-deoxy-D-manno-octulosonate biosynthesis; 3-deoxy-D-manno-octulosonate from D-ribulose 5-phosphate: step 2/3. Its pathway is bacterial outer membrane biogenesis; lipopolysaccharide biosynthesis. The sequence is that of 2-dehydro-3-deoxyphosphooctonate aldolase from Vibrio vulnificus (strain CMCP6).